Here is a 312-residue protein sequence, read N- to C-terminus: Malate dehydrogenase (312 aa).

NAD(+) is bound by residues 12 to 17 (GAGFTG) and aspartate 36. Arginine 87 and arginine 93 together coordinate substrate. Residues asparagine 100 and 123-125 (LTN) each bind NAD(+). Asparagine 125 lines the substrate pocket. Serine 149 carries the post-translational modification Phosphoserine. Residue arginine 156 participates in substrate binding. The Proton acceptor role is filled by histidine 180.

Belongs to the LDH/MDH superfamily. MDH type 3 family.

The catalysed reaction is (S)-malate + NAD(+) = oxaloacetate + NADH + H(+). Functionally, catalyzes the reversible oxidation of malate to oxaloacetate. The protein is Malate dehydrogenase of Geobacillus sp. (strain WCH70).